Reading from the N-terminus, the 513-residue chain is Na(+)/H(+) antiporter NhaB (513 aa).

11 helical membrane passes run 23 to 43 (LALI…PFVA), 52 to 72 (IFTL…LLAI), 97 to 117 (LLLM…LFIF), 144 to 164 (FLDA…FYGI), 202 to 222 (LMMH…VGEP), 238 to 258 (FFLR…LTCL), 303 to 323 (AIIG…VGLI), 348 to 368 (TESL…AVII), 391 to 411 (LFYI…VGTI), 447 to 467 (ATPN…APLI), and 475 to 495 (VWMA…CVEF).

This sequence belongs to the NhaB Na(+)/H(+) (TC 2.A.34) antiporter family.

Its subcellular location is the cell inner membrane. The catalysed reaction is 2 Na(+)(in) + 3 H(+)(out) = 2 Na(+)(out) + 3 H(+)(in). Its function is as follows. Na(+)/H(+) antiporter that extrudes sodium in exchange for external protons. This Escherichia coli (strain SMS-3-5 / SECEC) protein is Na(+)/H(+) antiporter NhaB.